The following is a 1091-amino-acid chain: Integrin alpha-6 (1091 aa).

An N-terminal signal peptide occupies residues M1–A23. The Extracellular segment spans residues F24–S1011. 7 FG-GAP repeats span residues E30–T95, N101–D166, D176–M229, D244–H300, L301–N363, V364–T419, and K420–N479. N-linked (GlcNAc...) asparagine glycosylation is present at N78. Disulfide bonds link C86/C94, C131/C154, and C175/C188. 2 N-linked (GlcNAc...) asparagine glycosylation sites follow: N223 and N284. Positions 324, 326, 328, and 332 each coordinate Ca(2+). N370 carries N-linked (GlcNAc...) asparagine glycosylation. Residues D386, N388, D390, Y392, D394, D441, D443, N445, Y447, and D449 each contribute to the Ca(2+) site. Disulfide bonds link C489/C496, C502/C562, C626/C632, and C726/C737. N-linked (GlcNAc...) asparagine glycans are attached at residues N731, N746, and N927. Intrachain disulfides connect C881–C928 and C934–C939. A glycan (N-linked (GlcNAc...) asparagine) is linked at N958. The helical transmembrane segment at G1012–W1037 threads the bilayer. Residues K1038–S1091 are Cytoplasmic-facing. C1039 carries the S-palmitoyl cysteine; by DHHC3 lipid modification. The GFFKR motif signature appears at G1040–R1044. R1064 is subject to Phosphoserine.

The protein belongs to the integrin alpha chain family. In terms of assembly, heterodimer of an alpha and a beta subunit. The alpha subunit is composed of a heavy and a light chain linked by a disulfide bond. Alpha-6 associates with either beta-1 (ITGB1) or beta-4 (ITGB4) to form ITGA6:ITGB1 and ITGA6:ITGB4, respectively. ITGA6:ITGB1 is found in a complex with CD9; interaction takes place in oocytes and is involved in sperm-egg fusion. ITGA6:ITGB4 is found in a ternary complex with NRG1 and ERBB3. ITGA6:ITGB4 is found in a ternary complex with IGF1 and IGF1R. ITGA6:ITGB4 interacts with IGF2. Interacts with ADAM9. Interacts with RAB21. Interacts with MDK. ITGA6:ITGB1 interacts with MDK; this interaction mediates MDK-induced neurite outgrowth. Interacts with CD82; this interaction down-regulates ITGA6-mediated cell adhesion. Isoforms containing segment A, but not segment B, are the major targets for PMA-induced phosphorylation. Phosphorylation occurs on 'Ser-1064' of isoform alpha-6X1A. Phosphorylation is not required for the induction of integrin alpha-6A/beta-1 high affinity but may reduce the affinity for ligand. Post-translationally, undergoes PLAU-mediated cleavage at residues Arg-595-596-Arg in a time-dependent manner to produce processed integrin alpha-6 (alpha6p). In terms of processing, palmitoylation by DHHC3 enhances stability and cell surface expression. Expressed at low levels in normal skin tissue with elevated levels in skin tumors.

It localises to the cell membrane. In terms of biological role, integrin alpha-6/beta-1 (ITGA6:ITGB1) is a receptor for laminin on platelets. Integrin alpha-6/beta-1 (ITGA6:ITGB1) is present in oocytes and is involved in sperm-egg fusion. Integrin alpha-6/beta-4 (ITGA6:ITGB4) is a receptor for laminin in epithelial cells and it plays a critical structural role in the hemidesmosome. ITGA6:ITGB4 binds to NRG1 (via EGF domain) and this binding is essential for NRG1-ERBB signaling. ITGA6:ITGB4 binds to IGF1 and this binding is essential for IGF1 signaling. ITGA6:ITGB4 binds to IGF2 and this binding is essential for IGF2 signaling. This Mus musculus (Mouse) protein is Integrin alpha-6 (Itga6).